We begin with the raw amino-acid sequence, 479 residues long: uncharacterized protein (479 aa).

10 helical membrane-spanning segments follow: residues isoleucine 11–isoleucine 31, isoleucine 43–valine 63, glycine 90–leucine 110, serine 151–glutamate 171, isoleucine 195–glycine 215, tryptophan 223–tyrosine 243, lysine 274–histidine 294, isoleucine 295–threonine 315, threonine 328–phenylalanine 348, and tryptophan 447–methionine 467.

The protein belongs to the SLC13A/DASS transporter (TC 2.A.47) family. DIT1 subfamily.

It localises to the cell inner membrane. This is an uncharacterized protein from Haemophilus influenzae (strain ATCC 51907 / DSM 11121 / KW20 / Rd).